A 368-amino-acid chain; its full sequence is Biotin synthase (368 aa).

A Radical SAM core domain is found at 46 to 277; it reads VHGDEVALCG…AAHIFVMGGR (232 aa). Residues C64, C68, and C71 each coordinate [4Fe-4S] cluster. The [2Fe-2S] cluster site is built by S109, C142, and C202. The interval 347-368 is disordered; the sequence is RAAEPGGKRGLPVVGPPRGGCA.

This sequence belongs to the radical SAM superfamily. Biotin synthase family. As to quaternary structure, homodimer. [4Fe-4S] cluster serves as cofactor. [2Fe-2S] cluster is required as a cofactor.

The catalysed reaction is (4R,5S)-dethiobiotin + (sulfur carrier)-SH + 2 reduced [2Fe-2S]-[ferredoxin] + 2 S-adenosyl-L-methionine = (sulfur carrier)-H + biotin + 2 5'-deoxyadenosine + 2 L-methionine + 2 oxidized [2Fe-2S]-[ferredoxin]. It functions in the pathway cofactor biosynthesis; biotin biosynthesis; biotin from 7,8-diaminononanoate: step 2/2. Its function is as follows. Catalyzes the conversion of dethiobiotin (DTB) to biotin by the insertion of a sulfur atom into dethiobiotin via a radical-based mechanism. The polypeptide is Biotin synthase (Anaeromyxobacter sp. (strain Fw109-5)).